A 599-amino-acid chain; its full sequence is Elongation factor 4 (599 aa).

One can recognise a tr-type G domain in the interval 5–187 (SHIRNFSIIA…RLVTVIPAPE (183 aa)). GTP-binding positions include 17–22 (DHGKST) and 134–137 (NKMD).

Belongs to the TRAFAC class translation factor GTPase superfamily. Classic translation factor GTPase family. LepA subfamily.

It localises to the cell inner membrane. It catalyses the reaction GTP + H2O = GDP + phosphate + H(+). In terms of biological role, required for accurate and efficient protein synthesis under certain stress conditions. May act as a fidelity factor of the translation reaction, by catalyzing a one-codon backward translocation of tRNAs on improperly translocated ribosomes. Back-translocation proceeds from a post-translocation (POST) complex to a pre-translocation (PRE) complex, thus giving elongation factor G a second chance to translocate the tRNAs correctly. Binds to ribosomes in a GTP-dependent manner. In Pseudomonas paraeruginosa (strain DSM 24068 / PA7) (Pseudomonas aeruginosa (strain PA7)), this protein is Elongation factor 4.